The primary structure comprises 406 residues: NIPA-like protein 3 (406 aa).

4 helical membrane passes run 33-53 (NLIGALLAIFGHLVVSIALNL), 76-96 (WWLGLFLMLLGELGVFASYAF), 101-121 (LIVPLSAVSVIASAIIGIIFI), and 135-155 (VLSFVGCGLAVVGTYLLVTFA). N-linked (GlcNAc...) asparagine glycosylation is present at Asn166. Helical transmembrane passes span 171 to 191 (LVSWPFLLYMLVEIILFCLLL), 202 to 222 (IVVILLLVALLGSMTVVTVKA), 240 to 260 (PIFYVMFVCMVATAVYQAAFL), 271 to 291 (LIASVGYILSTTIAITAGAIF), and 300 to 320 (VLHICMFALGCLIAFLGVFLI). Ser372 carries the post-translational modification Phosphoserine.

This sequence belongs to the NIPA family.

Its subcellular location is the membrane. In Homo sapiens (Human), this protein is NIPA-like protein 3 (NIPAL3).